A 231-amino-acid chain; its full sequence is ADP-ribose pyrophosphatase (231 aa).

Phe2 carries the post-translational modification N-acetylserine. Substrate-binding positions include Trp46, 64–65, Arg69, and Arg103; that span reads WD. In terms of domain architecture, Nudix hydrolase spans 75–214; it reads GGVDGIGILT…DQQGYKLDAR (140 aa). Ala115 is a binding site for Mg(2+). The Nudix box motif lies at 116–137; that stretch reads GLIDAGEDIDTAALRELKEETG. Leu117 provides a ligand contact to substrate. Mg(2+) is bound by residues Glu131 and Glu135. Asp152 lines the substrate pocket. A Mg(2+)-binding site is contributed by Glu185.

This sequence belongs to the Nudix hydrolase family. NudF subfamily. Requires Mg(2+) as cofactor. Mn(2+) serves as cofactor.

It carries out the reaction ADP-D-ribose + H2O = D-ribose 5-phosphate + AMP + 2 H(+). The polypeptide is ADP-ribose pyrophosphatase (YSA1) (Saccharomyces cerevisiae (strain ATCC 204508 / S288c) (Baker's yeast)).